Here is a 95-residue protein sequence, read N- to C-terminus: Large ribosomal subunit protein bL27 (95 aa).

Positions 1-9 (MLKMNLQFF) are excised as a propeptide.

It belongs to the bacterial ribosomal protein bL27 family. In terms of processing, the N-terminus is cleaved by ribosomal processing cysteine protease Prp.

This is Large ribosomal subunit protein bL27 from Lachnoclostridium phytofermentans (strain ATCC 700394 / DSM 18823 / ISDg) (Clostridium phytofermentans).